The sequence spans 203 residues: NADH-quinone oxidoreductase subunit C (203 aa).

It belongs to the complex I 30 kDa subunit family. As to quaternary structure, NDH-1 is composed of 14 different subunits. Subunits NuoB, C, D, E, F, and G constitute the peripheral sector of the complex.

The protein resides in the cell inner membrane. The enzyme catalyses a quinone + NADH + 5 H(+)(in) = a quinol + NAD(+) + 4 H(+)(out). In terms of biological role, NDH-1 shuttles electrons from NADH, via FMN and iron-sulfur (Fe-S) centers, to quinones in the respiratory chain. The immediate electron acceptor for the enzyme in this species is believed to be ubiquinone. Couples the redox reaction to proton translocation (for every two electrons transferred, four hydrogen ions are translocated across the cytoplasmic membrane), and thus conserves the redox energy in a proton gradient. The polypeptide is NADH-quinone oxidoreductase subunit C (Methylibium petroleiphilum (strain ATCC BAA-1232 / LMG 22953 / PM1)).